The following is a 334-amino-acid chain: Holliday junction branch migration complex subunit RuvB (334 aa).

The large ATPase domain (RuvB-L) stretch occupies residues 4–184 (ADRLIQPQLQ…FGIPLRLEFY (181 aa)). Residues Arg-24, Gly-65, Lys-68, Thr-69, Thr-70, 131 to 133 (EDY), Arg-174, Tyr-184, and Arg-221 each bind ATP. Thr-69 contacts Mg(2+). A small ATPAse domain (RuvB-S) region spans residues 185–255 (NVKDLSTIVT…VAEQALDLLD (71 aa)). Residues 258-334 (GEGFDYMDRK…YLHFGMIKPE (77 aa)) form a head domain (RuvB-H) region. Positions 294, 313, and 318 each coordinate DNA.

The protein belongs to the RuvB family. Homohexamer. Forms an RuvA(8)-RuvB(12)-Holliday junction (HJ) complex. HJ DNA is sandwiched between 2 RuvA tetramers; dsDNA enters through RuvA and exits via RuvB. An RuvB hexamer assembles on each DNA strand where it exits the tetramer. Each RuvB hexamer is contacted by two RuvA subunits (via domain III) on 2 adjacent RuvB subunits; this complex drives branch migration. In the full resolvosome a probable DNA-RuvA(4)-RuvB(12)-RuvC(2) complex forms which resolves the HJ.

It localises to the cytoplasm. It carries out the reaction ATP + H2O = ADP + phosphate + H(+). Its function is as follows. The RuvA-RuvB-RuvC complex processes Holliday junction (HJ) DNA during genetic recombination and DNA repair, while the RuvA-RuvB complex plays an important role in the rescue of blocked DNA replication forks via replication fork reversal (RFR). RuvA specifically binds to HJ cruciform DNA, conferring on it an open structure. The RuvB hexamer acts as an ATP-dependent pump, pulling dsDNA into and through the RuvAB complex. RuvB forms 2 homohexamers on either side of HJ DNA bound by 1 or 2 RuvA tetramers; 4 subunits per hexamer contact DNA at a time. Coordinated motions by a converter formed by DNA-disengaged RuvB subunits stimulates ATP hydrolysis and nucleotide exchange. Immobilization of the converter enables RuvB to convert the ATP-contained energy into a lever motion, pulling 2 nucleotides of DNA out of the RuvA tetramer per ATP hydrolyzed, thus driving DNA branch migration. The RuvB motors rotate together with the DNA substrate, which together with the progressing nucleotide cycle form the mechanistic basis for DNA recombination by continuous HJ branch migration. Branch migration allows RuvC to scan DNA until it finds its consensus sequence, where it cleaves and resolves cruciform DNA. In Shewanella sp. (strain ANA-3), this protein is Holliday junction branch migration complex subunit RuvB.